The chain runs to 368 residues: MSHVVRPILIILASVAIYTKYYLSFQNGFIDLLSTMGSQGSLAGLQDGLRSHYTGLDPLDKFLKACNVFFWPIFHGTSPALSLYAIAFAGSMIPMWLILLMHTCVKSSIVEIVMINALTGLLVQGIGPGVMMCVLLAMRSTSMEEFAVTSIPAVSILGPNDLPLSLVVCYILPLALSSLPAPASISVPSKQLFIASWQGWPLYIALAVGIAHSLRYGYRRSRPQQLFRHAYAFALACSIISHVGLLLISFLSIYPKSPFLSLHSADLHPQSLLVPRLPWQEVKITSLESGVLRFLHWDYSISSTGALLWCYDVYWEDRMRGKGWIAFFSLSSQLATMSLAFGPCSVALALYWTALSKNLMKNEHVRKR.

6 helical membrane passes run Ile10–Ile30, Leu81–Met101, Leu118–Met138, Leu192–His212, Phe233–Ile253, and Leu334–Ala354.

The protein belongs to the membrane-bound ascI terpene cyclase family.

The protein resides in the membrane. The protein operates within secondary metabolite biosynthesis. In terms of biological role, part of the gene cluster that mediates the biosynthesis of the indole diterpenes penitrems. The geranylgeranyl diphosphate (GGPP) synthase penG catalyzes the first step in penitrem biosynthesis via conversion of farnesyl pyrophosphate and isopentyl pyrophosphate into geranylgeranyl pyrophosphate (GGPP). Condensation of indole-3-glycerol phosphate with GGPP by the prenyl transferase penC then forms 3-geranylgeranylindole (3-GGI). Epoxidation by the FAD-dependent monooxygenase penM leads to a epoxidized-GGI that is substrate of the terpene cyclase penB for cyclization to yield paspaline. Paspaline is subsequently converted to 13-desoxypaxilline by the cytochrome P450 monooxygenase penP, the latter being then converted to paxilline by the cytochrome P450 monooxygenase penQ. Paxilline is converted to beta-paxitriol via C-10 ketoreduction by the short-chain dehydrogenase PC-15 which can be monoprenylated at the C-20 by the indole diterpene prenyltransferase penD. A two-step elimination (acetylation and elimination) process performed by the O-acetyltransferase PC-16 and the P.simplicissimum ptmI-ortholog not yet identified in P.crustosum, leads to the production of the prenylated form of penijanthine. The FAD-linked oxidoreductase ptmO then converts the prenylated form of penijanthine into PC-M5 which is in turn transformed into PC-M4 by the aromatic dimethylallyltransferase PC-22. A series of oxidation steps involving 4 cytochrome P450 monooxygenases (PC-21, PC-05, PC-23, PC-20) and a FAD-dependent monooxygenase (PC-14) are required for the transformation of PC-M4 to penitrems A and E. Synthesis of these final products is proposed to proceed via penitrems D and C (PC-21, PC-05, PC-14) and penitrems B and F (PC-21, PC-05, PC-14, PC-23). In Penicillium crustosum (Blue mold fungus), this protein is Terpene cyclase penA.